The following is a 55-amino-acid chain: Photosystem II reaction center X protein (55 aa).

The chain crosses the membrane as a helical span at residues 24-44 (IGSFLAAAALIVVPAASFLLW).

It belongs to the PsbX family. Type 2 subfamily. In terms of assembly, PSII consists of a core antenna complex that captures photons, and an electron transfer chain that converts photonic excitation into a charge separation. PSII forms dimeric complexes.

The protein resides in the cellular thylakoid membrane. Functionally, involved in the binding and/or turnover of quinones at the Q(B) site of Photosystem II. The sequence is that of Photosystem II reaction center X protein from Prochlorococcus marinus (strain SARG / CCMP1375 / SS120).